Here is a 403-residue protein sequence, read N- to C-terminus: Creatinase (403 aa).

His232 is an active-site residue.

The protein belongs to the peptidase M24 family. Creatinase subfamily. In terms of assembly, homodimer.

It carries out the reaction creatine + H2O = sarcosine + urea. This chain is Creatinase, found in Pseudomonas putida (Arthrobacter siderocapsulatus).